We begin with the raw amino-acid sequence, 561 residues long: DNA ligase B (561 aa).

Lys125 serves as the catalytic N6-AMP-lysine intermediate.

The protein belongs to the NAD-dependent DNA ligase family. LigB subfamily.

The enzyme catalyses NAD(+) + (deoxyribonucleotide)n-3'-hydroxyl + 5'-phospho-(deoxyribonucleotide)m = (deoxyribonucleotide)n+m + AMP + beta-nicotinamide D-nucleotide.. Its function is as follows. Catalyzes the formation of phosphodiester linkages between 5'-phosphoryl and 3'-hydroxyl groups in double-stranded DNA using NAD as a coenzyme and as the energy source for the reaction. The protein is DNA ligase B of Salmonella paratyphi A (strain AKU_12601).